Consider the following 46-residue polypeptide: Mu-segestritoxin-Sf1c (46 aa).

Disulfide bonds link C3/C19, C10/C22, C18/C42, and C24/C40. The keys region for toxin activity stretch occupies residues 31–33; it reads RPW.

The protein belongs to the neurotoxin 16 (SFI) family. In terms of tissue distribution, expressed by the venom gland.

The protein resides in the secreted. In terms of biological role, insecticidal toxin. It inhibits insect voltage-gated sodium channels (Nav) by partially blocking the channel pore in DUM neurons from the American cockroach, not by acting as a gating modifier. The inhibition is only partially reversible after prolonged washout. In vivo, the toxin causes flaccid paralysis followed by death when injected into Heliothis virescens larvae. It also causes uncoordinated movements followed by full paralysis to sheep blowflies (Lucilia cuprina). When the toxin is fused to snowdrop lectin, it is orally active against larvae of the tomato moth (Laconobia oleracea), the rice brown planthopper (Nilaparvata lugens), and the peach-potato aphid (Myzus persicae). In Segestria florentina (Tube-web spider), this protein is Mu-segestritoxin-Sf1c.